A 655-amino-acid chain; its full sequence is Large subunit GTPase 1 homolog (655 aa).

The segment at 1–31 (MGRRRAPGGGSLGRVLIRHQTQRSRSHRHTD) is disordered. The segment covering 16-28 (LIRHQTQRSRSHR) has biased composition (basic residues). Residues Ser93 and Ser97 each carry the phosphoserine modification. The region spanning 164 to 441 (WRQLWRVIER…LCDCPGLVMP (278 aa)) is the CP-type G domain. 212–215 (NKAD) provides a ligand contact to GTP. Phosphoserine is present on Ser252. The interval 253-359 (KDEVNSVAGE…ENSQMSNKSH (107 aa)) is disordered. Acidic residues predominate over residues 288–327 (EESESDDDDSEYEDCQEDEEEDWQTCSEEDSNPEEGQEEG). Residues 328–339 (GCDRDQKEHGPE) show a composition bias toward basic and acidic residues. The span at 344 to 359 (QSRASPENSQMSNKSH) shows a compositional bias: polar residues. Residues 390 to 397 (GYPNVGKS) and 434 to 437 (DCPG) contribute to the GTP site. The interval 625–655 (SAENVPGKPWKKHGNRNKKEKSRRLYRHLDV) is disordered. Over residues 633-655 (PWKKHGNRNKKEKSRRLYRHLDV) the composition is skewed to basic residues.

This sequence belongs to the TRAFAC class YlqF/YawG GTPase family. LSG1 subfamily.

The protein localises to the cytoplasm. It localises to the endoplasmic reticulum. Its subcellular location is the nucleus. The protein resides in the cajal body. It catalyses the reaction GTP + H2O = GDP + phosphate + H(+). Functionally, functions as a GTPase. May act by mediating the release of NMD3 from the 60S ribosomal subunit after export into the cytoplasm during the 60S ribosomal subunit maturation. This chain is Large subunit GTPase 1 homolog, found in Rattus norvegicus (Rat).